The sequence spans 567 residues: Malate synthase (567 aa).

Arg177 functions as the Proton acceptor in the catalytic mechanism. The active-site Proton donor is the Asp466. A Microbody targeting signal motif is present at residues 565–567 (CKL).

It belongs to the malate synthase family.

Its subcellular location is the glyoxysome. It carries out the reaction glyoxylate + acetyl-CoA + H2O = (S)-malate + CoA + H(+). It participates in carbohydrate metabolism; glyoxylate cycle; (S)-malate from isocitrate: step 2/2. The polypeptide is Malate synthase (Oryza sativa subsp. japonica (Rice)).